The chain runs to 352 residues: fMet-Leu-Phe receptor (352 aa).

The Extracellular segment spans residues 1-27 (MDSNASLPLNVSGGTQATPAGLVVLDV). N-linked (GlcNAc...) asparagine glycans are attached at residues asparagine 4 and asparagine 10. The helical transmembrane segment at 28–50 (FSYLILVVTFVLGVLGNGLVIWV) threads the bilayer. Residues 51–61 (TGFRMTHTVTT) are Cytoplasmic-facing. A helical transmembrane segment spans residues 62–83 (ISYLNLALADFSFTSTLPFFIV). Residues 84 to 100 (TKALGGHWPFGWFLCKF) are Extracellular-facing. Cysteine 98 and cysteine 178 are disulfide-bonded. Residues 101–121 (VFTIVDINLFGSVFLIALIAL) form a helical membrane-spanning segment. The Cytoplasmic portion of the chain corresponds to 122 to 140 (DRCICVLHPVWAQNHRNVS). A helical membrane pass occupies residues 141–162 (LAKKVIVGPWICALLLTLPVII). Residues 163–207 (RVTTLSHPRAPGKMACTFDWSPWTEDPAEKLKVAISMFMVRGIIR) lie on the Extracellular side of the membrane. Residues 208–228 (FIIGFSTPMSIVAVCYGLIAT) traverse the membrane as a helical segment. The Cytoplasmic segment spans residues 229–244 (KIHRQGLIKSSRPLRV). A helical transmembrane segment spans residues 245–268 (LSFVVASFLLCWSPYQIAALIATV). The Extracellular portion of the chain corresponds to 269–287 (RIRELLLGMGKDLRIVLDV). Residues 288-307 (TSFVAFFNSCLNPMLYVFMG) form a helical membrane-spanning segment. Over 308-352 (QDFRERLIHSLPASLERALSEDSAQTSDTGTNSTSAPAEAELQAI) the chain is Cytoplasmic.

The protein belongs to the G-protein coupled receptor 1 family. Phosphorylated; which is necessary for desensitization. Neutrophils.

The protein resides in the cell membrane. Functionally, high affinity receptor for N-formyl-methionyl peptides (fMLP), which are powerful neutrophil chemotactic factors. Binding of fMLP to the receptor stimulates intracellular calcium mobilization and superoxide anion release. This response is mediated via a G-protein that activates a phosphatidylinositol-calcium second messenger system. Receptor for TAFA4, mediates its effects on chemoattracting macrophages, promoting phagocytosis and increasing ROS release. Receptor for cathepsin CTSG, leading to increased phagocyte chemotaxis. This chain is fMet-Leu-Phe receptor (FPR1), found in Oryctolagus cuniculus (Rabbit).